Reading from the N-terminus, the 807-residue chain is cAMP-regulated phosphoprotein 21 (807 aa).

Positions 1-127 (MSEQGGLTPT…KNREKLSERP (127 aa)) are disordered. N-acetylserine is present on S2. The residue at position 32 (S32) is a Phosphoserine. Residues 32 to 57 (SLDEEEKLELQRRLAAQNQERRKSKS) are a coiled coil. The residue at position 55 (S55) is a Phosphoserine; by PKA. Over residues 89–98 (IHLQLSSFPS) the composition is skewed to polar residues. Positions 101 to 127 (EEDKSRKDDSEREKEKDKNREKLSERP) are enriched in basic and acidic residues. Position 133 is a phosphoserine (S133). The R3H domain occupies 163–226 (RMILLKMEQE…SVIINKTSST (64 aa)). An SUZ domain is found at 227 to 298 (RIPEQRFCEH…VRERIFAHDS (72 aa)). Residues 245–282 (SQKRFILKRDNSSIDKEDNQNRMHPFRDDRRSKSIEER) are disordered. Phosphoserine occurs at positions 265 and 298. Disordered stretches follow at residues 328–434 (LFRA…TSSV), 474–536 (GSIL…QPQM), 552–576 (SQLSMSRQSSGDTPEPPSGTVYPAS), and 595–627 (QLSTGGFSDSGPPISQQVLQAPPSPQGFVQQPP). The segment covering 337-348 (GRTSGSRQSSSE) has biased composition (low complexity). Residues 349–358 (TELRWPDHQR) show a composition bias toward basic and acidic residues. The span at 359 to 380 (AWSSTDSDSSNRNLKPTMTKTA) shows a compositional bias: polar residues. Phosphoserine occurs at positions 361 and 381. Over residues 401 to 421 (GKLSKTGSESSSSAGSSGSLS) the composition is skewed to low complexity. Over residues 422–434 (RTHPQSTALTSSV) the composition is skewed to polar residues. A compositionally biased stretch (pro residues) spans 514–524 (QQPPQQQPSPQ). Residues 525-535 (PQQQVQASQPQ) are compositionally biased toward low complexity. 2 stretches are compositionally biased toward polar residues: residues 552-563 (SQLSMSRQSSGD) and 595-613 (QLSTGGFSDSGPPISQQVL). A Phosphoserine modification is found at S557. Residue R650 is modified to Asymmetric dimethylarginine.

As to quaternary structure, interacts with CALM1. Phosphorylation of isoform 2 at Ser-55 is enhanced upon dopamine D1 receptor activation and favors interaction with CALM1. Post-translationally, methylated by CARM1 at Arg-650 in immature thymocytes. Present at high levels in thymus and low levels in brain. In thymus, isoform 1 is specifically found in immature thymocytes (at protein level).

It localises to the cytoplasm. Functionally, may act as a competitive inhibitor of calmodulin-dependent enzymes such as calcineurin in neurons. The sequence is that of cAMP-regulated phosphoprotein 21 (Arpp21) from Mus musculus (Mouse).